The following is a 308-amino-acid chain: UDP-N-acetylenolpyruvoylglucosamine reductase (308 aa).

The 164-residue stretch at 22-185 (RVGGPADWLF…TEATFRAEAG (164 aa)) folds into the FAD-binding PCMH-type domain. Residue R165 is part of the active site. Basic and acidic residues predominate over residues 197–211 (QIARRDSSQPTKERS). The interval 197-228 (QIARRDSSQPTKERSAGSTFRNPAGFSSTGRA) is disordered. Positions 212-226 (AGSTFRNPAGFSSTG) are enriched in polar residues. S214 (proton donor) is an active-site residue. E296 is a catalytic residue.

It belongs to the MurB family. FAD serves as cofactor.

It is found in the cytoplasm. It catalyses the reaction UDP-N-acetyl-alpha-D-muramate + NADP(+) = UDP-N-acetyl-3-O-(1-carboxyvinyl)-alpha-D-glucosamine + NADPH + H(+). It functions in the pathway cell wall biogenesis; peptidoglycan biosynthesis. In terms of biological role, cell wall formation. This is UDP-N-acetylenolpyruvoylglucosamine reductase from Cereibacter sphaeroides (strain ATCC 17029 / ATH 2.4.9) (Rhodobacter sphaeroides).